We begin with the raw amino-acid sequence, 458 residues long: Serine/threonine-protein kinase tricornered (458 aa).

Residues 92 to 389 (FEALKVIGRG…LEDLKSVPFF (298 aa)) enclose the Protein kinase domain. Residues 98–106 (IGRGAFGEV) and K121 contribute to the ATP site. An interaction with mats and Mob1 region spans residues 118–179 (YAMKVLRKAD…EFLPGGDMMT (62 aa)). D215 functions as the Proton acceptor in the catalytic mechanism. S287 carries the post-translational modification Phosphoserine. An AGC-kinase C-terminal domain is found at 390–458 (RGVDWEHIRE…YKRFEVRNLE (69 aa)). T448 is modified (phosphothreonine).

This sequence belongs to the protein kinase superfamily. AGC Ser/Thr protein kinase family. As to quaternary structure, interacts with, and is activated by, Mob1. Mg(2+) is required as a cofactor.

The protein resides in the cytoplasm. It localises to the nucleus. The catalysed reaction is L-seryl-[protein] + ATP = O-phospho-L-seryl-[protein] + ADP + H(+). It catalyses the reaction L-threonyl-[protein] + ATP = O-phospho-L-threonyl-[protein] + ADP + H(+). Serine/threonine-protein kinase involved in controlling cell structure and proliferation of a variety of polarized outgrowths including epidermal hairs, bristles, arista laterals, and dendrites. Together with fry, maintains the integrity of epidermal hairs and is an essential component of the signaling pathway regulating dendritic branching of sensory neurons. Reduces neurite outgrowth by phosphorylating pav/pavarotti, thereby inhibiting its function in microtubule-microtubule sliding. This is Serine/threonine-protein kinase tricornered from Drosophila pseudoobscura pseudoobscura (Fruit fly).